Here is a 299-residue protein sequence, read N- to C-terminus: Spermatocyte protein spe-11 (299 aa).

Positions 1-38 (MSDEEIDISTALNNKTTPKKKSLKRNSNSQEGYESPEE) are disordered.

As to expression, expressed in mature sperm.

Its subcellular location is the cytoplasm. It localises to the perinuclear region. Paternally sperm-supplied factor required for embryogenesis. Plays a role in preventing polyspermy possibly by promoting the formation of a continuous and cohesive eggshell chitin layer. The chain is Spermatocyte protein spe-11 (spe-11) from Caenorhabditis elegans.